A 405-amino-acid polypeptide reads, in one-letter code: Acetylornithine/succinyldiaminopimelate aminotransferase (405 aa).

Pyridoxal 5'-phosphate-binding positions include 108–109 (GT) and F141. R144 is a binding site for N(2)-acetyl-L-ornithine. 226-229 (DEVQ) contacts pyridoxal 5'-phosphate. K255 carries the N6-(pyridoxal phosphate)lysine modification. S283 contributes to the N(2)-acetyl-L-ornithine binding site. Position 284 (T284) interacts with pyridoxal 5'-phosphate.

It belongs to the class-III pyridoxal-phosphate-dependent aminotransferase family. ArgD subfamily. In terms of assembly, homodimer. It depends on pyridoxal 5'-phosphate as a cofactor.

The protein localises to the cytoplasm. The catalysed reaction is N(2)-acetyl-L-ornithine + 2-oxoglutarate = N-acetyl-L-glutamate 5-semialdehyde + L-glutamate. It carries out the reaction N-succinyl-(2S,6S)-2,6-diaminopimelate + 2-oxoglutarate = (S)-2-succinylamino-6-oxoheptanedioate + L-glutamate. The protein operates within amino-acid biosynthesis; L-arginine biosynthesis; N(2)-acetyl-L-ornithine from L-glutamate: step 4/4. Its pathway is amino-acid biosynthesis; L-lysine biosynthesis via DAP pathway; LL-2,6-diaminopimelate from (S)-tetrahydrodipicolinate (succinylase route): step 2/3. Involved in both the arginine and lysine biosynthetic pathways. In Salmonella typhi, this protein is Acetylornithine/succinyldiaminopimelate aminotransferase.